The chain runs to 277 residues: Probable endonuclease LCL3 (277 aa).

A helical membrane pass occupies residues 39 to 56; sequence WIAPIIAAGATMGFWSFY. Positions 77–239 constitute a TNase-like domain; it reads RSLFGKVTSV…RQKGKGMWSL (163 aa). Arg-126 is a catalytic residue. Ca(2+) is bound at residue Asp-131. Catalysis depends on residues Glu-134 and Arg-174.

The protein belongs to the LCL3 family.

Its subcellular location is the mitochondrion. It localises to the membrane. The protein is Probable endonuclease LCL3 (LCL3) of Podospora anserina (strain S / ATCC MYA-4624 / DSM 980 / FGSC 10383) (Pleurage anserina).